Consider the following 313-residue polypeptide: N(5)-(carboxyethyl)ornithine synthase (313 aa).

Positions 15, 71, and 92 each coordinate pyruvate. Gly171–Ala176 contacts NADP(+).

The protein belongs to the AlaDH/PNT family. CEOS subfamily. Homotetramer.

The catalysed reaction is N(5)-[1(S)-1-carboxyethyl]-L-ornithine + NADP(+) + H2O = L-ornithine + pyruvate + NADPH + H(+). Its activity is regulated as follows. Is potently inhibited by the reaction product N(5)-(L-1-carboxyethyl)-L-ornithine. Functionally, catalyzes the NADPH-dependent reductive condensation between pyruvic acid and the side chain amino group of L-ornithine to form N(5)-(L-1-carboxyethyl)-L-ornithine. To a lesser extent, can also use L-lysine as substrate (yielding N(6)-(L-1-carboxyethyl)-L-lysine). NADH cannot replace NADPH in the condensation reaction. This chain is N(5)-(carboxyethyl)ornithine synthase (ceo), found in Lactococcus lactis subsp. lactis (Streptococcus lactis).